A 587-amino-acid chain; its full sequence is Putative ankyrin repeat protein L66 (587 aa).

ANK repeat units lie at residues 77 to 106 (DKNLSMLLATKYGKLNIIKYLVRNGTDIRI), 108 to 136 (NNYPVRKASKYGYLDIVKYLIREDCDVSD), 137 to 166 (YDNYALRKATKNGYFEIVKLLVDQGADVHC), 168 to 196 (DNAPIKLACKYGYSKMVKFFHKKFLDVNY), 199 to 228 (NEDLLLKLASSGGHYKIVKYLVTKSNNIHF), 230 to 256 (DSLISVIKKGHLDILKYFISKGVILGN), 259 to 288 (NIRNATLMACKKGHYNVVEYLIDNIISIEN), 302 to 331 (FKKNLITNTCISGNLDMLKYLISKGINVAF), 333 to 360 (DNLPIKISACHDHLHLVKYLVSISNVKI), 361 to 390 (NYENILISASENGCIKVVKYLVDKGVNVKD), 392 to 418 (TAIYSAGINGYLQIVKFLESNGADLIK), 420 to 448 (HNEIFLECSSNGYLNVIKYIVSKYNINKS), 449 to 478 (IYDKALIIASKNNQLKTVKYLVHMGADIKS), 480 to 507 (KFHDMEKIIDNDLELLKYLVSKGLKINN), 509 to 537 (YKNLISKIIMNNDLDKLKYLISLGVNMKC), and 539 to 567 (RIDTFNSCIQNRNKEMLSYLISRKIKLIC).

This chain is Putative ankyrin repeat protein L66, found in Acanthamoeba polyphaga mimivirus (APMV).